The following is a 1433-amino-acid chain: DNA-directed RNA polymerase subunit beta' (1433 aa).

Zn(2+) contacts are provided by Cys66, Cys68, Cys81, and Cys84. Residues 328 to 347 form a disordered region; the sequence is RKSSAVKTDSNRPLKSLSDS. The span at 329 to 346 shows a compositional bias: polar residues; it reads KSSAVKTDSNRPLKSLSD. Residues Asp477, Asp479, and Asp481 each coordinate Mg(2+). Residues Cys825, Cys899, Cys906, and Cys909 each coordinate Zn(2+).

It belongs to the RNA polymerase beta' chain family. The RNAP catalytic core consists of 2 alpha, 1 beta, 1 beta' and 1 omega subunit. When a sigma factor is associated with the core the holoenzyme is formed, which can initiate transcription. The cofactor is Mg(2+). Zn(2+) serves as cofactor.

It carries out the reaction RNA(n) + a ribonucleoside 5'-triphosphate = RNA(n+1) + diphosphate. Functionally, DNA-dependent RNA polymerase catalyzes the transcription of DNA into RNA using the four ribonucleoside triphosphates as substrates. The sequence is that of DNA-directed RNA polymerase subunit beta' from Christiangramia forsetii (strain DSM 17595 / CGMCC 1.15422 / KT0803) (Gramella forsetii).